The sequence spans 368 residues: tRNA-specific 2-thiouridylase MnmA (368 aa).

Residues 11–18 and methionine 37 each bind ATP; that span reads GMSGGVDS. Positions 97-99 are interaction with target base in tRNA; the sequence is NPD. Cysteine 102 functions as the Nucleophile in the catalytic mechanism. Cysteine 102 and cysteine 199 form a disulfide bridge. ATP is bound at residue glycine 127. Residues 149-151 form an interaction with tRNA region; it reads KDQ. Cysteine 199 acts as the Cysteine persulfide intermediate in catalysis. Residues 311-312 form an interaction with tRNA region; that stretch reads RY.

It belongs to the MnmA/TRMU family. Interacts with TusE.

It is found in the cytoplasm. The enzyme catalyses S-sulfanyl-L-cysteinyl-[protein] + uridine(34) in tRNA + AH2 + ATP = 2-thiouridine(34) in tRNA + L-cysteinyl-[protein] + A + AMP + diphosphate + H(+). In terms of biological role, catalyzes the 2-thiolation of uridine at the wobble position (U34) of tRNA(Lys), tRNA(Glu) and tRNA(Gln), leading to the formation of s(2)U34, the first step of tRNA-mnm(5)s(2)U34 synthesis. Sulfur is provided by IscS, via a sulfur-relay system. Binds ATP and its substrate tRNAs. The polypeptide is tRNA-specific 2-thiouridylase MnmA (Salmonella choleraesuis (strain SC-B67)).